Consider the following 707-residue polypeptide: Nucleolin 2 (707 aa).

A disordered region spans residues 1–446; the sequence is MGKSSKKSAV…TPASNQNQAT (446 aa). Composition is skewed to basic and acidic residues over residues 30–40 and 47–60; these read RNAEDEIEKAV and TVREKVVPSKEEAK. 3 stretches are compositionally biased toward acidic residues: residues 75–85, 108–120, and 144–153; these read SSEEDSSESEE, SSDDSSDDSSSDD, and DSSDESLSDD. A compositionally biased stretch (low complexity) spans 158–170; that stretch reads KPAAPLKKPVALA. Composition is skewed to acidic residues over residues 219–232, 248–263, and 271–287; these read DSSDSDSDSESDED, SESSDSESDSDSDDEA, and ESSDSSDSDSESESDSD. Basic and acidic residues predominate over residues 300 to 311; that stretch reads LTKDTKKGQSKD. A compositionally biased stretch (acidic residues) spans 312 to 326; it reads ESEDSSDESSEESGD. A compositionally biased stretch (low complexity) spans 336–347; sequence STTSGTTKPSPK. Over residues 355-370 the composition is skewed to acidic residues; sequence SDDESDEDDSSDESSD. Low complexity predominate over residues 376-394; the sequence is KQTQAKKQAPVAQESSSSD. Residues 395–406 are compositionally biased toward acidic residues; the sequence is ESSEEDSDMESD. The span at 407–417 shows a compositional bias: basic and acidic residues; it reads EPAKTPQKKET. Polar residues predominate over residues 420–429; the sequence is SVGSNKSATK. An RRM 1 domain is found at 449 to 525; the sequence is KTLFVGNLPY…RPVRLDLARE (77 aa). Disordered stretches follow at residues 527-546 and 629-707; these read GAYTPGSGRDNSSFKKPAQS and RPRP…GDDD. The 82-residue stretch at 549 to 630 folds into the RRM 2 domain; it reads NTIFIKGFDT…YSLYVDEARP (82 aa). The span at 657-681 shows a compositional bias: basic and acidic residues; the sequence is GRGDGSRGRGDRGRGRGFGRGDRGH.

The protein localises to the nucleus. It localises to the nucleolus. Its function is as follows. Involved in pre-rRNA processing and ribosome assembly. The protein is Nucleolin 2 of Oryza sativa subsp. japonica (Rice).